The chain runs to 118 residues: MENATLLKSTTRHIRIFAAEIDRDGELVPSNQVLTLDIDPDNEFNWNEDALQKIYRKFDELVEASSGADLTDYNLRRIGSDLEHYLRSLLQKGEISYNLSARVTNYSLGLPQVAVEDK.

The protein belongs to the complex I NdhM subunit family. As to quaternary structure, NDH-1 can be composed of about 15 different subunits; different subcomplexes with different compositions have been identified which probably have different functions.

The protein localises to the cellular thylakoid membrane. It carries out the reaction a plastoquinone + NADH + (n+1) H(+)(in) = a plastoquinol + NAD(+) + n H(+)(out). The enzyme catalyses a plastoquinone + NADPH + (n+1) H(+)(in) = a plastoquinol + NADP(+) + n H(+)(out). Its function is as follows. NDH-1 shuttles electrons from an unknown electron donor, via FMN and iron-sulfur (Fe-S) centers, to quinones in the respiratory and/or the photosynthetic chain. The immediate electron acceptor for the enzyme in this species is believed to be plastoquinone. Couples the redox reaction to proton translocation, and thus conserves the redox energy in a proton gradient. Cyanobacterial NDH-1 also plays a role in inorganic carbon-concentration. The chain is NAD(P)H-quinone oxidoreductase subunit M from Trichormus variabilis (strain ATCC 29413 / PCC 7937) (Anabaena variabilis).